The following is a 133-amino-acid chain: Large-conductance mechanosensitive channel (133 aa).

Helical transmembrane passes span 10 to 30 and 76 to 96; these read FAMR…GAFG and GAFI…FLMI.

This sequence belongs to the MscL family. In terms of assembly, homopentamer.

The protein resides in the cell inner membrane. Functionally, channel that opens in response to stretch forces in the membrane lipid bilayer. May participate in the regulation of osmotic pressure changes within the cell. The protein is Large-conductance mechanosensitive channel of Pasteurella multocida (strain Pm70).